Reading from the N-terminus, the 260-residue chain is Small ribosomal subunit protein uS2 (260 aa).

Belongs to the universal ribosomal protein uS2 family.

This chain is Small ribosomal subunit protein uS2, found in Roseobacter denitrificans (strain ATCC 33942 / OCh 114) (Erythrobacter sp. (strain OCh 114)).